Reading from the N-terminus, the 359-residue chain is DNA-directed RNA polymerase RPB3-11 homolog (359 aa).

The protein in the N-terminal section; belongs to the archaeal RpoD/eukaryotic RPB3 RNA polymerase subunit family. In the C-terminal section; belongs to the archaeal RpoL/eukaryotic RPB11/RPC19 RNA polymerase subunit family. As to quaternary structure, part of the viral DNA-directed RNA polymerase that consists of 8 polII-like subunits (RPB1, RPB2, RPB3, RPB5, RPB6, RPB7, RPB9, RPB10), a capping enzyme and a termination factor.

It localises to the host cytoplasm. Its subcellular location is the virion. Component of the DNA-directed RNA polymerase (RNAP) that catalyzes the transcription in the cytoplasm of viral DNA into RNA using the four ribonucleoside triphosphates as substrates. This chain is DNA-directed RNA polymerase RPB3-11 homolog, found in Ornithodoros (relapsing fever ticks).